We begin with the raw amino-acid sequence, 520 residues long: Ubiquitin carboxyl-terminal hydrolase MINDY-1 (520 aa).

Residues Met1–Met155 are disordered. The segment covering Lys26–Lys37 has biased composition (basic and acidic residues). A compositionally biased stretch (polar residues) spans Thr43 to Lys54. The segment covering Ala77 to Lys86 has biased composition (low complexity). Composition is skewed to polar residues over residues Val93–Met112 and Ser132–Glu146. Residue Cys189 is the Nucleophile of the active site. The active-site Proton acceptor is the His371. 2 disordered regions span residues Ser422–Gln441 and Glu467–Leu520. Positions Gln441–Gln479 are ubiquitin-binding domain (UBD). The segment covering Ala469–Gln498 has biased composition (low complexity). The segment covering Lys511–Leu520 has biased composition (basic and acidic residues).

This sequence belongs to the MINDY deubiquitinase family. FAM63 subfamily.

It carries out the reaction Thiol-dependent hydrolysis of ester, thioester, amide, peptide and isopeptide bonds formed by the C-terminal Gly of ubiquitin (a 76-residue protein attached to proteins as an intracellular targeting signal).. Its function is as follows. Hydrolase that can specifically remove 'Lys-48'-linked conjugated ubiquitin from proteins. May play a regulatory role at the level of protein turnover. In Danio rerio (Zebrafish), this protein is Ubiquitin carboxyl-terminal hydrolase MINDY-1 (mindy1).